The chain runs to 501 residues: Actin nucleation-promoting factor WASL (501 aa).

Serine 2 is subject to N-acetylserine. Residues 31-138 (LGKKCVTMSS…KAVTDLLGRR (108 aa)) form the WH1 domain. Residues 135-158 (LGRRQRKSEKRRDAPNGPNLPMAT) are disordered. The 14-residue stretch at 200-213 (IGTPSNFQHIGHVG) folds into the CRIB domain. Serine 239 is modified (phosphoserine; by TNK2). Tyrosine 253 bears the Phosphotyrosine; by FAK1 and TNK2 mark. Disordered regions lie at residues 263-403 (EAVK…GNKA) and 442-501 (QLKS…EWED). The span at 273–387 (APPPPPPSRG…PPGPPPPPGL (115 aa)) shows a compositional bias: pro residues. Arginine 304 carries the omega-N-methylarginine modification. 2 WH2 domains span residues 401–418 (NKAA…LKKV) and 429–446 (GRDA…LKSV). Over residues 442–453 (QLKSVSDGQEST) the composition is skewed to polar residues. Phosphoserine occurs at positions 480 and 481. A compositionally biased stretch (acidic residues) spans 482 to 501 (DEDEDDDDEEDFEDDDEWED).

In terms of assembly, binds actin and the Arp2/3 complex. Interacts with CDC42. Interacts with FCHSD1. Interacts with FCHSD2. Binds to SH3 domains of GRB2. Interacts with the C-terminal SH3 domain of DNMBP. Interacts with SNX9. Interacts with the WW domains of PRPF40A/FBP11. Interacts with PTK2/FAK1. Interacts with PACSIN1, PACSIN2 and PACSIN3. Interacts with NOSTRIN. Binds to TNK2. Interacts with SNX33. Interacts with NONO (via second RRM domain); the interaction is direct. Component of a multiprotein complex with NONO and SFPQ; associates with the complex via direct interaction with NONO. Phosphorylation at Ser-239, Tyr-253, Ser-480 and Ser-481 enhances actin polymerization activity.

It is found in the cytoplasm. The protein resides in the cytoskeleton. It localises to the nucleus. Functionally, regulates actin polymerization by stimulating the actin-nucleating activity of the Arp2/3 complex. Involved in various processes, such as mitosis and cytokinesis, via its role in the regulation of actin polymerization. Together with CDC42, involved in the extension and maintenance of the formation of thin, actin-rich surface projections called filopodia. In addition to its role in the cytoplasm, also plays a role in the nucleus by regulating gene transcription, probably by promoting nuclear actin polymerization. Binds to HSF1/HSTF1 and forms a complex on heat shock promoter elements (HSE) that negatively regulates HSP90 expression. Plays a role in dendrite spine morphogenesis. This Mus musculus (Mouse) protein is Actin nucleation-promoting factor WASL (Wasl).